The sequence spans 483 residues: Cysteine--tRNA ligase (483 aa).

Cys-29 contacts Zn(2+). The 'HIGH' region motif lies at 31-41 (ITVYDYCHLGH). Zn(2+)-binding residues include Cys-215, His-240, and Glu-244. The short motif at 272–276 (KMSKS) is the 'KMSKS' region element. Lys-275 is a binding site for ATP.

This sequence belongs to the class-I aminoacyl-tRNA synthetase family. In terms of assembly, monomer. Zn(2+) serves as cofactor.

The protein localises to the cytoplasm. It catalyses the reaction tRNA(Cys) + L-cysteine + ATP = L-cysteinyl-tRNA(Cys) + AMP + diphosphate. The polypeptide is Cysteine--tRNA ligase (cysS) (Synechocystis sp. (strain ATCC 27184 / PCC 6803 / Kazusa)).